The sequence spans 136 residues: Histone H3.3C-like (136 aa).

R3 is subject to Asymmetric dimethylarginine; by PRMT6; alternate. R3 is subject to Citrulline; alternate. Position 4 is a phosphothreonine; by HASPIN (T4). K5 bears the Allysine; alternate mark. At K5 the chain carries N6,N6,N6-trimethyllysine; alternate. K5 is subject to N6,N6-dimethyllysine; alternate. K5 is modified (N6-(2-hydroxyisobutyryl)lysine; alternate). K5 carries the N6-(beta-hydroxybutyryl)lysine; alternate modification. K5 carries the N6-acetyllysine; alternate modification. Residue K5 is modified to N6-methyllysine; alternate. T7 bears the Phosphothreonine; by PKC mark. N6,N6,N6-trimethyllysine; alternate is present on K10. At K10 the chain carries N6,N6-dimethyllysine; alternate. An N6-(2-hydroxyisobutyryl)lysine; alternate modification is found at K10. Position 10 is an N6-acetyllysine; alternate (K10). At K10 the chain carries N6-methyllysine; alternate. An ADP-ribosylserine; alternate modification is found at S11. The residue at position 11 (S11) is a Phosphoserine; alternate; by AURKB, AURKC, RPS6KA3, RPS6KA4 and RPS6KA5. T12 is modified (phosphothreonine; by PKC). K15 is subject to N6-(2-hydroxyisobutyryl)lysine; alternate. K15 is subject to N6-(beta-hydroxybutyryl)lysine; alternate. An N6-acetyllysine; alternate modification is found at K15. K15 is subject to N6-glutaryllysine; alternate. The residue at position 15 (K15) is an N6-succinyllysine; alternate. Position 18 is a citrulline; alternate (R18). An Asymmetric dimethylarginine; by CARM1; alternate modification is found at R18. K19 and K28 each carry N6-(2-hydroxyisobutyryl)lysine; alternate. An N6-(beta-hydroxybutyryl)lysine; alternate modification is found at K19. K19 and K28 each carry N6-acetyllysine; alternate. 2 positions are modified to N6-methyllysine; alternate: K19 and K28. An N6-glutaryllysine; alternate mark is found at K19 and K28. Residue K19 is modified to N6-butyryllysine; alternate. K28 carries the post-translational modification N6,N6,N6-trimethyllysine; alternate. K28 is modified (N6,N6-dimethyllysine; alternate). An ADP-ribosylserine; alternate modification is found at S29. S29 carries the post-translational modification Phosphoserine; alternate; by AURKB, AURKC and RPS6KA5. S32 is modified (phosphoserine). N6-methyllysine is present on K38. Phosphotyrosine is present on Y42. K57 bears the N6,N6,N6-trimethyllysine; alternate mark. Position 57 is an N6-(2-hydroxyisobutyryl)lysine; alternate (K57). The residue at position 57 (K57) is an N6-(beta-hydroxybutyryl)lysine; alternate. At K57 the chain carries N6-acetyllysine; alternate. N6-glutaryllysine; alternate is present on K57. An N6-succinyllysine; alternate modification is found at K57. K57 bears the N6-methyllysine; by EHMT2; alternate mark. Position 58 is a phosphoserine (S58). N6-(2-hydroxyisobutyryl)lysine; alternate occurs at positions 65 and 80. K65 and K80 each carry N6-methyllysine; alternate. At K80 the chain carries N6,N6,N6-trimethyllysine; alternate. The residue at position 80 (K80) is an N6,N6-dimethyllysine; alternate. K80 bears the N6-acetyllysine; alternate mark. K80 carries the post-translational modification N6-glutaryllysine; alternate. An N6-succinyllysine; alternate modification is found at K80. At T81 the chain carries Phosphothreonine. A Phosphoserine modification is found at S87.

It belongs to the histone H3 family. The nucleosome is a histone octamer containing two molecules each of H2A, H2B, H3 and H4 assembled in one H3-H4 heterotetramer and two H2A-H2B heterodimers. The octamer wraps approximately 147 bp of DNA. Acetylation is generally linked to gene activation. Acetylation on Lys-19 favors methylation at Arg-18. Post-translationally, citrullination at Arg-18 by PADI4 impairs methylation and represses transcription. In terms of processing, asymmetric dimethylation at Arg-18 (H3R17me2a) by CARM1 is linked to gene activation. Asymmetric dimethylation at Arg-3 (H3R2me2a) by PRMT6 is linked to gene repression and is mutually exclusive with H3 Lys-5 methylation (H3K4me2 and H3K4me3). H3R2me2a is present at the 3' of genes regardless of their transcription state and is enriched on inactive promoters, while it is absent on active promoters. Methylation at Lys-5 (H3K4me) and Lys-80 (H3K79me) are linked to gene activation. Methylation at Lys-5 (H3K4me) facilitates subsequent acetylation of H3 and H4. Methylation at Lys-80 (H3K79me) is associated with DNA double-strand break (DSB) responses and is a specific target for TP53BP1. Methylation at Lys-10 (H3K9me) and Lys-28 (H3K27me) are linked to gene repression. Methylation at Lys-10 (H3K9me) is a specific target for HP1 proteins (CBX1, CBX3 and CBX5) and prevents subsequent phosphorylation at Ser-11 (H3S10ph) and acetylation of H3 and H4. Methylation at Lys-5 (H3K4me) and Lys-80 (H3K79me) require preliminary monoubiquitination of H2B at 'Lys-120'. Methylation at Lys-10 (H3K9me) and Lys-28 (H3K27me) are enriched in inactive X chromosome chromatin. Monomethylation at Lys-57 (H3K56me1) by EHMT2/G9A in G1 phase promotes interaction with PCNA and is required for DNA replication. Post-translationally, phosphorylated at Thr-4 (H3T3ph) by HASPIN during prophase and dephosphorylated during anaphase. Phosphorylation at Ser-11 (H3S10ph) by AURKB is crucial for chromosome condensation and cell-cycle progression during mitosis and meiosis. In addition phosphorylation at Ser-11 (H3S10ph) by RPS6KA4 and RPS6KA5 is important during interphase because it enables the transcription of genes following external stimulation, like mitogens, stress, growth factors or UV irradiation and result in the activation of genes, such as c-fos and c-jun. Phosphorylation at Ser-11 (H3S10ph), which is linked to gene activation, prevents methylation at Lys-10 (H3K9me) but facilitates acetylation of H3 and H4. Phosphorylation at Ser-11 (H3S10ph) by AURKB mediates the dissociation of HP1 proteins (CBX1, CBX3 and CBX5) from heterochromatin. Phosphorylation at Ser-11 (H3S10ph) is also an essential regulatory mechanism for neoplastic cell transformation. Phosphorylated at Ser-29 (H3S28ph) by MAP3K20 isoform 1, RPS6KA5 or AURKB during mitosis or upon ultraviolet B irradiation. Phosphorylation at Thr-7 (H3T6ph) by PRKCB is a specific tag for epigenetic transcriptional activation that prevents demethylation of Lys-5 (H3K4me) by LSD1/KDM1A. At centromeres, specifically phosphorylated at Thr-12 (H3T11ph) from prophase to early anaphase, by DAPK3 and PKN1. Phosphorylation at Thr-12 (H3T11ph) by PKN1 or isoform M2 of PKM (PKM2) is a specific tag for epigenetic transcriptional activation that promotes demethylation of Lys-10 (H3K9me) by KDM4C/JMJD2C. Phosphorylation at Tyr-42 (H3Y41ph) by JAK2 promotes exclusion of CBX5 (HP1 alpha) from chromatin. In terms of processing, lysine deamination at Lys-5 (H3K4all) to form allysine is mediated by LOXL2. Allysine formation by LOXL2 only takes place on H3K4me3 and results in gene repression. Butyrylation of histones marks active promoters and competes with histone acetylation. It is present during late spermatogenesis. Post-translationally, succinylation at Lys-80 (H3K79succ) by KAT2A takes place with a maximum frequency around the transcription start sites of genes. It gives a specific tag for epigenetic transcription activation. In terms of processing, serine ADP-ribosylation constitutes the primary form of ADP-ribosylation of proteins in response to DNA damage. Serine ADP-ribosylation at Ser-11 (H3S10ADPr) is mutually exclusive with phosphorylation at Ser-11 (H3S10ph) and impairs acetylation at Lys-10 (H3K9ac).

It is found in the nucleus. The protein resides in the chromosome. In terms of biological role, core component of nucleosome. Nucleosomes wrap and compact DNA into chromatin, limiting DNA accessibility to the cellular machineries which require DNA as a template. Histones thereby play a central role in transcription regulation, DNA repair, DNA replication and chromosomal stability. DNA accessibility is regulated via a complex set of post-translational modifications of histones, also called histone code, and nucleosome remodeling. The polypeptide is Histone H3.3C-like (Bos taurus (Bovine)).